Here is an 81-residue protein sequence, read N- to C-terminus: Photosystem I iron-sulfur center (81 aa).

4Fe-4S ferredoxin-type domains follow at residues 1–31 (MSHTVKIYDTCIGCTQCVRACPTDVLEMVPW) and 37–68 (GQIASSPRTEDCVGCKRCETACPTDFLSIRVY). Residues cysteine 11, cysteine 14, cysteine 17, cysteine 21, cysteine 48, cysteine 51, cysteine 54, and cysteine 58 each contribute to the [4Fe-4S] cluster site.

In terms of assembly, the cyanobacterial PSI reaction center is composed of one copy each of PsaA,B,C,D,E,F,I,J,K,L,M and X, and forms trimeric complexes. [4Fe-4S] cluster is required as a cofactor.

Its subcellular location is the cellular thylakoid membrane. The enzyme catalyses reduced [plastocyanin] + hnu + oxidized [2Fe-2S]-[ferredoxin] = oxidized [plastocyanin] + reduced [2Fe-2S]-[ferredoxin]. Its function is as follows. Apoprotein for the two 4Fe-4S centers FA and FB of photosystem I (PSI); essential for photochemical activity. FB is the terminal electron acceptor of PSI, donating electrons to ferredoxin. The C-terminus interacts with PsaA/B/D and helps assemble the protein into the PSI complex. Required for binding of PsaD and PsaE to PSI. PSI is a plastocyanin/cytochrome c6-ferredoxin oxidoreductase, converting photonic excitation into a charge separation, which transfers an electron from the donor P700 chlorophyll pair to the spectroscopically characterized acceptors A0, A1, FX, FA and FB in turn. The chain is Photosystem I iron-sulfur center from Acaryochloris marina (strain MBIC 11017).